A 106-amino-acid chain; its full sequence is Small ribosomal subunit protein mS33 (106 aa).

Serine 2 is subject to N-acetylserine. Residues 85-94 show a composition bias toward basic residues; sequence LKKLRGKVKP. A disordered region spans residues 85–106; sequence LKKLRGKVKPRKGEGKRAAKKK. Positions 95-106 are enriched in basic and acidic residues; that stretch reads RKGEGKRAAKKK.

It belongs to the mitochondrion-specific ribosomal protein mS33 family. As to quaternary structure, component of the mitochondrial ribosome small subunit (28S) which comprises a 12S rRNA and about 30 distinct proteins.

It is found in the mitochondrion. In Bos taurus (Bovine), this protein is Small ribosomal subunit protein mS33.